Here is a 230-residue protein sequence, read N- to C-terminus: Transcription factor bHLH147 (230 aa).

Polar residues predominate over residues 1 to 17 (MESISPVSNQLLQPTTT). A disordered region spans residues 1–52 (MESISPVSNQLLQPTTTSSNSDRSRRKRKKKSSPSSVEKSPSPSISLEKWRS). Residues 33–46 (SPSSVEKSPSPSIS) are compositionally biased toward low complexity. One can recognise a bHLH domain in the interval 147–196 (KQRATVLRLKAKGLPAVQRKVKVLSRLVPGCRKQSLPVVLEETTDYIAAM). The disordered stretch occupies residues 210 to 230 (VSSSPPPPTPGHEGGQTHMLG).

In terms of assembly, homodimer. Interacts with PRE3.

The protein resides in the nucleus. In terms of biological role, atypical bHLH transcription factor probably unable to bind DNA. Negatively regulates brassinosteroid signaling. The sequence is that of Transcription factor bHLH147 (BHLH147) from Arabidopsis thaliana (Mouse-ear cress).